The sequence spans 368 residues: Aspartate-semialdehyde dehydrogenase (368 aa).

NADP(+)-binding positions include 10–13 (RGMV), 37–38 (TS), and Gln-72. Residue Arg-101 participates in phosphate binding. Cys-134 (acyl-thioester intermediate) is an active-site residue. NADP(+) contacts are provided by residues 160–161 (SG) and Pro-191. Glu-239 is a substrate binding site. Lys-242 contacts phosphate. Arg-266 contacts substrate. Residue His-273 is the Proton acceptor of the active site. Gln-349 is an NADP(+) binding site.

Belongs to the aspartate-semialdehyde dehydrogenase family. In terms of assembly, homodimer.

The enzyme catalyses L-aspartate 4-semialdehyde + phosphate + NADP(+) = 4-phospho-L-aspartate + NADPH + H(+). The protein operates within amino-acid biosynthesis; L-lysine biosynthesis via DAP pathway; (S)-tetrahydrodipicolinate from L-aspartate: step 2/4. Its pathway is amino-acid biosynthesis; L-methionine biosynthesis via de novo pathway; L-homoserine from L-aspartate: step 2/3. It functions in the pathway amino-acid biosynthesis; L-threonine biosynthesis; L-threonine from L-aspartate: step 2/5. Its function is as follows. Catalyzes the NADPH-dependent formation of L-aspartate-semialdehyde (L-ASA) by the reductive dephosphorylation of L-aspartyl-4-phosphate. The sequence is that of Aspartate-semialdehyde dehydrogenase from Azotobacter vinelandii.